Reading from the N-terminus, the 156-residue chain is C-type lectin lectoxin-Phi2 (156 aa).

Residues 1–23 (MGRFIFVSLGLLVLAFSLSGIGA) form the signal peptide. 3 disulfide bridges follow: C27-C38, C55-C154, and C129-C146. The 122-residue stretch at 34–155 (HNVSCYKLIN…CNRRHRFLCK (122 aa)) folds into the C-type lectin domain. Residues N35 and N109 are each glycosylated (N-linked (GlcNAc...) asparagine). The Mannose-binding signature appears at 119–121 (EPN). Ca(2+)-binding residues include E127, N142, and D143.

The protein belongs to the true venom lectin family. As to expression, expressed by the venom gland.

The protein localises to the secreted. In terms of biological role, mannose-binding lectin which recognizes specific carbohydrate structures and agglutinates a variety of animal cells by binding to cell-surface glycoproteins and glycolipids. May be a calcium-dependent lectin. The protein is C-type lectin lectoxin-Phi2 of Philodryas olfersii (Green snake).